The chain runs to 344 residues: Ferredoxin--NADP reductase (344 aa).

The FAD site is built by Ser12, Asp31, Lys39, Tyr43, Val83, Ile118, Asp285, and Ser326.

Belongs to the ferredoxin--NADP reductase type 2 family. As to quaternary structure, homodimer. It depends on FAD as a cofactor.

It carries out the reaction 2 reduced [2Fe-2S]-[ferredoxin] + NADP(+) + H(+) = 2 oxidized [2Fe-2S]-[ferredoxin] + NADPH. The protein is Ferredoxin--NADP reductase of Staphylococcus aureus (strain JH1).